A 120-amino-acid chain; its full sequence is Large ribosomal subunit protein uL18 (120 aa).

Positions 1 to 22 (MKTTRKESLKRRHRRIRRKVSG) are disordered. Residues 8–20 (SLKRRHRRIRRKV) show a composition bias toward basic residues.

This sequence belongs to the universal ribosomal protein uL18 family. In terms of assembly, part of the 50S ribosomal subunit; part of the 5S rRNA/L5/L18/L25 subcomplex. Contacts the 5S and 23S rRNAs.

This is one of the proteins that bind and probably mediate the attachment of the 5S RNA into the large ribosomal subunit, where it forms part of the central protuberance. This is Large ribosomal subunit protein uL18 from Crocosphaera subtropica (strain ATCC 51142 / BH68) (Cyanothece sp. (strain ATCC 51142)).